The primary structure comprises 80 residues: Caltrin (80 aa).

The N-terminal stretch at 1-32 is a signal peptide; that stretch reads MMAGRRSWPAMATVLLALLVCLGELVDSKPQP.

In terms of biological role, inhibits calcium transport into spermatozoa; it does not bind directly to calcium. Binds to calmodulin. Inhibits the growth of microorganisms. Seem to act as an antibiotic by permeabilizing the bacterial membrane. The polypeptide is Caltrin (PYY2) (Bos taurus (Bovine)).